Here is a 369-residue protein sequence, read N- to C-terminus: S-(hydroxymethyl)glutathione dehydrogenase (369 aa).

Zn(2+) contacts are provided by Cys-40, His-62, Cys-92, Cys-95, Cys-98, Cys-106, and Cys-169.

It belongs to the zinc-containing alcohol dehydrogenase family. Class-III subfamily. In terms of assembly, homodimer. Zn(2+) serves as cofactor.

It is found in the cytoplasm. It catalyses the reaction S-(hydroxymethyl)glutathione + NADP(+) = S-formylglutathione + NADPH + H(+). The enzyme catalyses S-(hydroxymethyl)glutathione + NAD(+) = S-formylglutathione + NADH + H(+). It carries out the reaction a primary alcohol + NAD(+) = an aldehyde + NADH + H(+). The catalysed reaction is a secondary alcohol + NAD(+) = a ketone + NADH + H(+). It catalyses the reaction S-nitrosoglutathione + NADH + H(+) = S-(hydroxysulfenamide)glutathione + NAD(+). Functionally, has high formaldehyde dehydrogenase activity in the presence of glutathione and catalyzes the oxidation of normal alcohols in a reaction that is not GSH-dependent. In addition, hemithiolacetals other than those formed from GSH, including omega-thiol fatty acids, also are substrates. Also acts as a S-nitroso-glutathione reductase by catalyzing the NADH-dependent reduction of S-nitrosoglutathione. This chain is S-(hydroxymethyl)glutathione dehydrogenase (frmA), found in Escherichia coli O6:H1 (strain CFT073 / ATCC 700928 / UPEC).